Reading from the N-terminus, the 691-residue chain is Elongation factor G (691 aa).

The tr-type G domain occupies S6–I281. GTP is bound by residues A15 to T22, D79 to H83, and N133 to D136.

It belongs to the TRAFAC class translation factor GTPase superfamily. Classic translation factor GTPase family. EF-G/EF-2 subfamily.

The protein localises to the cytoplasm. In terms of biological role, catalyzes the GTP-dependent ribosomal translocation step during translation elongation. During this step, the ribosome changes from the pre-translocational (PRE) to the post-translocational (POST) state as the newly formed A-site-bound peptidyl-tRNA and P-site-bound deacylated tRNA move to the P and E sites, respectively. Catalyzes the coordinated movement of the two tRNA molecules, the mRNA and conformational changes in the ribosome. The protein is Elongation factor G of Wolbachia pipientis subsp. Culex pipiens (strain wPip).